The chain runs to 294 residues: MSPRGTGCSAGLLMTVGWLLLAGLQSARGTNVTAAVQDAGLAHEGEGEEETENNDSETAENYAPPETEDVSNRNVVKEVEFGMCTVTCGIGVREVILTNGCPGGESKCVVRVEECRGPTDCGWGKPISESLESVRLACIHTSPLNRFKYMWKLLRQDQQSIILVNDSAILEVRKESHPLAFECDTLDNNEIVATIKFTVYTSSELQMRRSSLPATDAALIFVLTIGVIICVFIIFLLIFIIINWAAVKAFWGAKASTPEVQSEQSSVRYKDSTSLDQLPTEMPGEDDALSEWNE.

The signal sequence occupies residues 1-29 (MSPRGTGCSAGLLMTVGWLLLAGLQSARG). Topologically, residues 30 to 221 (TNVTAAVQDA…LPATDAALIF (192 aa)) are extracellular. Asparagine 31 is a glycosylation site (N-linked (GlcNAc...) asparagine). The disordered stretch occupies residues 42-70 (AHEGEGEEETENNDSETAENYAPPETEDV). The span at 46–58 (EGEEETENNDSET) shows a compositional bias: acidic residues. A helical membrane pass occupies residues 222–242 (VLTIGVIICVFIIFLLIFIII). Residues 243–294 (NWAAVKAFWGAKASTPEVQSEQSSVRYKDSTSLDQLPTEMPGEDDALSEWNE) are Cytoplasmic-facing. Serine 256 is subject to Phosphoserine. The span at 258 to 267 (PEVQSEQSSV) shows a compositional bias: polar residues. Residues 258–294 (PEVQSEQSSVRYKDSTSLDQLPTEMPGEDDALSEWNE) are disordered. A Phosphotyrosine modification is found at tyrosine 269. Residues 283–294 (PGEDDALSEWNE) show a composition bias toward acidic residues. Serine 290 bears the Phosphoserine mark.

In terms of assembly, interacts with CYLC1; the interaction may be relevant for proper acrosome attachment to the nuclear envelope. N-glycosylated. Testis specific.

The protein resides in the cytoplasmic vesicle. The protein localises to the secretory vesicle. It is found in the acrosome inner membrane. Plays a role in acrosome formation and establishment of normal sperm morphology during spermatogenesis. Important for male fertility. This chain is Sperm acrosome membrane-associated protein 1 (SPACA1), found in Homo sapiens (Human).